The sequence spans 332 residues: DNA-directed RNA polymerase subunit alpha (332 aa).

Residues 1–232 (MKGYLKDFLK…DQLSVFVDLE (232 aa)) are alpha N-terminal domain (alpha-NTD). The alpha C-terminal domain (alpha-CTD) stretch occupies residues 247–332 (IDPVLLRPID…SLGDRARIAG (86 aa)).

This sequence belongs to the RNA polymerase alpha chain family. Homodimer. The RNAP catalytic core consists of 2 alpha, 1 beta, 1 beta' and 1 omega subunit. When a sigma factor is associated with the core the holoenzyme is formed, which can initiate transcription.

It carries out the reaction RNA(n) + a ribonucleoside 5'-triphosphate = RNA(n+1) + diphosphate. DNA-dependent RNA polymerase catalyzes the transcription of DNA into RNA using the four ribonucleoside triphosphates as substrates. This Halorhodospira halophila (strain DSM 244 / SL1) (Ectothiorhodospira halophila (strain DSM 244 / SL1)) protein is DNA-directed RNA polymerase subunit alpha.